A 432-amino-acid polypeptide reads, in one-letter code: Glutamyl-tRNA reductase (432 aa).

Residues 49–52, Ser-101, 106–108, and Gln-112 each bind substrate; these read TCNR and EPQ. The Nucleophile role is filled by Cys-50. 181 to 186 contributes to the NADP(+) binding site; sequence GAGETI. The segment at 408–432 is disordered; it reads PEKPGYRHPPVATPIVRTDDANPAP.

This sequence belongs to the glutamyl-tRNA reductase family. As to quaternary structure, homodimer.

The enzyme catalyses (S)-4-amino-5-oxopentanoate + tRNA(Glu) + NADP(+) = L-glutamyl-tRNA(Glu) + NADPH + H(+). Its pathway is porphyrin-containing compound metabolism; protoporphyrin-IX biosynthesis; 5-aminolevulinate from L-glutamyl-tRNA(Glu): step 1/2. Functionally, catalyzes the NADPH-dependent reduction of glutamyl-tRNA(Glu) to glutamate 1-semialdehyde (GSA). The sequence is that of Glutamyl-tRNA reductase from Xanthomonas campestris pv. campestris (strain 8004).